Reading from the N-terminus, the 385-residue chain is UPF0284 protein PMM0439 (385 aa).

Belongs to the UPF0284 family.

In Prochlorococcus marinus subsp. pastoris (strain CCMP1986 / NIES-2087 / MED4), this protein is UPF0284 protein PMM0439.